A 296-amino-acid chain; its full sequence is Transcription repressor OFP3 (296 aa).

2 disordered regions span residues 27 to 115 (MSRS…SANA) and 131 to 196 (PSDQ…AHSS). Over residues 60–69 (LSSTAHHPQA) the composition is skewed to polar residues. The span at 78–88 (SFKRKIKRKTV) shows a compositional bias: basic residues. Residues 92–115 (SSRLKLSTSSSLNHRSKSSSSANA) are compositionally biased toward low complexity. Residues 136-159 (FVHDPEPHSSIDIKDELSVRKLDD) are compositionally biased toward basic and acidic residues. One can recognise an OVATE domain in the interval 228–287 (IVLSSVDPEKDFRESMVEMIMENKMREQKDLEDLLACYLSLNSSEYHDVIIKAFENTWLH).

Interacts with BLH1, BLH3, KNAT5 and KNAT7.

Its subcellular location is the nucleus. Functionally, transcriptional repressor that may regulate multiple aspects of plant growth and development through the regulation of BEL1-LIKE (BLH) and KNOX TALE (KNAT) homeodomain transcription factors. The protein is Transcription repressor OFP3 (OFP3) of Arabidopsis thaliana (Mouse-ear cress).